A 340-amino-acid polypeptide reads, in one-letter code: Serine/threonine-protein kinase PDIK1L (340 aa).

A Protein kinase domain is found at 8–333; it reads YDLIREVGRG…LELRLVQIAF (326 aa). ATP is bound by residues 14–22 and Lys37; that span reads VGRGSYGVV. Catalysis depends on Asp164, which acts as the Proton acceptor.

This sequence belongs to the protein kinase superfamily. Ser/Thr protein kinase family.

The protein resides in the nucleus. The catalysed reaction is L-seryl-[protein] + ATP = O-phospho-L-seryl-[protein] + ADP + H(+). It catalyses the reaction L-threonyl-[protein] + ATP = O-phospho-L-threonyl-[protein] + ADP + H(+). In Pongo abelii (Sumatran orangutan), this protein is Serine/threonine-protein kinase PDIK1L (PDIK1L).